A 188-amino-acid chain; its full sequence is Ribosomal RNA small subunit methyltransferase G (188 aa).

S-adenosyl-L-methionine contacts are provided by residues Gly69, Phe74, 119 to 120 (VQ), and Arg134.

The protein belongs to the methyltransferase superfamily. RNA methyltransferase RsmG family.

It is found in the cytoplasm. The enzyme catalyses guanosine(527) in 16S rRNA + S-adenosyl-L-methionine = N(7)-methylguanosine(527) in 16S rRNA + S-adenosyl-L-homocysteine. Functionally, specifically methylates the N7 position of guanine in position 527 of 16S rRNA. The sequence is that of Ribosomal RNA small subunit methyltransferase G from Campylobacter jejuni subsp. jejuni serotype O:2 (strain ATCC 700819 / NCTC 11168).